The primary structure comprises 337 residues: Fructose-1,6-bisphosphatase class 1 (337 aa).

Mg(2+)-binding residues include E91, D113, L115, and D116. Substrate-binding positions include 116–119 (DGSS), N209, Y242, and K275. E281 contributes to the Mg(2+) binding site.

This sequence belongs to the FBPase class 1 family. As to quaternary structure, homotetramer. The cofactor is Mg(2+).

The protein resides in the cytoplasm. It catalyses the reaction beta-D-fructose 1,6-bisphosphate + H2O = beta-D-fructose 6-phosphate + phosphate. The protein operates within carbohydrate biosynthesis; gluconeogenesis. The sequence is that of Fructose-1,6-bisphosphatase class 1 from Nitratidesulfovibrio vulgaris (strain DP4) (Desulfovibrio vulgaris).